The following is a 62-amino-acid chain: Large ribosomal subunit protein uL29 (62 aa).

This sequence belongs to the universal ribosomal protein uL29 family.

This Geobacter sulfurreducens (strain ATCC 51573 / DSM 12127 / PCA) protein is Large ribosomal subunit protein uL29.